The following is a 905-amino-acid chain: Protein translocase subunit SecA (905 aa).

ATP-binding positions include Gln-87, 105-109 (GEGKT), and Asp-512. A disordered region spans residues 565-584 (RRIDNQLRGRSGRQGDPGSS). Cys-886, Cys-888, Cys-897, and His-898 together coordinate Zn(2+).

This sequence belongs to the SecA family. In terms of assembly, monomer and homodimer. Part of the essential Sec protein translocation apparatus which comprises SecA, SecYEG and auxiliary proteins SecDF-YajC and YidC. The cofactor is Zn(2+).

It localises to the cell inner membrane. It is found in the cytoplasm. It carries out the reaction ATP + H2O + cellular proteinSide 1 = ADP + phosphate + cellular proteinSide 2.. Functionally, part of the Sec protein translocase complex. Interacts with the SecYEG preprotein conducting channel. Has a central role in coupling the hydrolysis of ATP to the transfer of proteins into and across the cell membrane, serving both as a receptor for the preprotein-SecB complex and as an ATP-driven molecular motor driving the stepwise translocation of polypeptide chains across the membrane. The protein is Protein translocase subunit SecA of Haemophilus ducreyi (strain 35000HP / ATCC 700724).